A 396-amino-acid chain; its full sequence is UPF0164 protein TP_0858 (396 aa).

An N-terminal signal peptide occupies residues 1-28 (MGTMIRHTFTHRCGALLCALALGSSTMA).

The protein belongs to the UPF0164 family.

The sequence is that of UPF0164 protein TP_0858 from Treponema pallidum (strain Nichols).